The primary structure comprises 265 residues: Histone H1 (265 aa).

Low complexity predominate over residues 1-27 (MATEEPIVAVETVPEPIVTEPTTITEP). Disordered regions lie at residues 1–66 (MATE…PTYE), 131–226 (AAKK…TTPG), and 242–265 (VKSV…GGRK). A compositionally biased stretch (basic and acidic residues) spans 29 to 42 (VPEKEEPKAEVEKT). Over residues 43-55 (KKAKGSKPKKASK) the composition is skewed to basic residues. The region spanning 61-130 (SHPTYEEMIK…KVKGSFKLSA (70 aa)) is the H15 domain. The segment covering 140–171 (PKAKTAAKAKSVKAKPAAKPKAKAVVKPKVAS) has biased composition (basic residues). The span at 186-202 (KPKTVAAKTKPTAAKPK) shows a compositional bias: low complexity. A compositionally biased stretch (basic residues) spans 203-215 (AVVKPKSKVKPAK). A compositionally biased stretch (low complexity) spans 216 to 226 (VAKTSVKTTPG).

This sequence belongs to the histone H1/H5 family.

Its subcellular location is the nucleus. It localises to the chromosome. Functionally, histones H1 are necessary for the condensation of nucleosome chains into higher-order structures. This Pisum sativum (Garden pea) protein is Histone H1.